Consider the following 417-residue polypeptide: NADH-quinone oxidoreductase subunit D (417 aa).

It belongs to the complex I 49 kDa subunit family. NDH-1 is composed of 14 different subunits. Subunits NuoB, C, D, E, F, and G constitute the peripheral sector of the complex.

The protein localises to the cell inner membrane. The catalysed reaction is a quinone + NADH + 5 H(+)(in) = a quinol + NAD(+) + 4 H(+)(out). NDH-1 shuttles electrons from NADH, via FMN and iron-sulfur (Fe-S) centers, to quinones in the respiratory chain. The immediate electron acceptor for the enzyme in this species is believed to be ubiquinone. Couples the redox reaction to proton translocation (for every two electrons transferred, four hydrogen ions are translocated across the cytoplasmic membrane), and thus conserves the redox energy in a proton gradient. The protein is NADH-quinone oxidoreductase subunit D of Burkholderia multivorans (strain ATCC 17616 / 249).